The chain runs to 889 residues: Translation initiation factor IF-2 (889 aa).

The interval 158-296 is disordered; that stretch reads LKEKQEKRRQ…KYKSDELQSQ (139 aa). The span at 209-228 shows a compositional bias: low complexity; it reads AAATPATSTAPATTSTTAAT. Residues 238-270 are compositionally biased toward basic and acidic residues; it reads VKPEEKGEKKKKPTKQDAWKDEPVKRREPKARG. The tr-type G domain maps to 391-560; that stretch reads PRAPVVTVMG…LLQAEVLELK (170 aa). The tract at residues 400 to 407 is G1; that stretch reads GHVDHGKT. Position 400–407 (400–407) interacts with GTP; the sequence is GHVDHGKT. The G2 stretch occupies residues 425-429; the sequence is GITQH. Residues 446–449 form a G3 region; that stretch reads DTPG. GTP-binding positions include 446-450 and 500-503; these read DTPGH and NKMD. The segment at 500–503 is G4; it reads NKMD. Residues 536–538 form a G5 region; it reads SAK.

This sequence belongs to the TRAFAC class translation factor GTPase superfamily. Classic translation factor GTPase family. IF-2 subfamily.

It is found in the cytoplasm. One of the essential components for the initiation of protein synthesis. Protects formylmethionyl-tRNA from spontaneous hydrolysis and promotes its binding to the 30S ribosomal subunits. Also involved in the hydrolysis of GTP during the formation of the 70S ribosomal complex. The protein is Translation initiation factor IF-2 of Nitrosomonas europaea (strain ATCC 19718 / CIP 103999 / KCTC 2705 / NBRC 14298).